The chain runs to 122 residues: UPF0102 protein RL0336 (122 aa).

Belongs to the UPF0102 family.

This is UPF0102 protein RL0336 from Rhizobium johnstonii (strain DSM 114642 / LMG 32736 / 3841) (Rhizobium leguminosarum bv. viciae).